Reading from the N-terminus, the 639-residue chain is Uridine permease (639 aa).

The segment at 1-37 is disordered; the sequence is MPVSDSGFDNSSKTMKDDTIPTEDYEEITKESEMGDA. The Cytoplasmic segment spans residues 1 to 162; sequence MPVSDSGFDN…LQLGLNWWQT (162 aa). The residue at position 54 (Thr54) is a Phosphothreonine. Ser56 carries the post-translational modification Phosphoserine. Residues 163-180 form a helical membrane-spanning segment; that stretch reads WICIWVGYTFVAFFLILG. Over 181–200 the chain is Extracellular; the sequence is SKVGNNYHISFPISSRVSFG. A helical transmembrane segment spans residues 201–225; it reads IYFSIWIVINRVVMACVWNSTLAYI. Residues 226–259 are Cytoplasmic-facing; that stretch reads GSQCVQLMLKAIFGTNLNTRIKDTIKNPNLTNFE. Residues 260 to 276 form a helical membrane-spanning segment; the sequence is FMCFMVFWVACLPFLWF. The Extracellular portion of the chain corresponds to 277–283; it reads PPDKLRH. Residues 284-305 traverse the membrane as a helical segment; the sequence is IFALKSAITPFAAFGFLIWTLC. The Cytoplasmic segment spans residues 306-367; that stretch reads KAKGHLALGS…KTYKSSVYSQ (62 aa). Residues 368–392 traverse the membrane as a helical segment; the sequence is LIALPVCYAIISLIGILSVSAAYTL. Residues 393–416 are Extracellular-facing; the sequence is YGVNYWSPLDILNRYLDNYTSGNR. A helical membrane pass occupies residues 417 to 435; sequence AGVFLISFIFAFDQLGANL. Topologically, residues 436–460 are cytoplasmic; that stretch reads SGNSIPAGTDLTALLPKFINIRRGS. Residues 461-477 form a helical membrane-spanning segment; that stretch reads YICALISLAICPWDLLS. Topologically, residues 478-483 are extracellular; sequence SSSKFT. Residues 484–507 form a helical membrane-spanning segment; the sequence is TALAAYAVFLSAIAGVISADYFIV. Topologically, residues 508–537 are cytoplasmic; it reads RKGYVNIFHCYTDKPGSYYMYNKYGTNWRA. The chain crosses the membrane as a helical span at residues 538-562; sequence VVAYIFGIAPNFAGFLGSVGVSVPI. The Extracellular segment spans residues 563-572; that stretch reads GAMKVYYLNY. The helical transmembrane segment at 573 to 590 threads the bilayer; it reads FVGYLLAALSYCILVYFY. Topologically, residues 591–639 are cytoplasmic; the sequence is PIKGIPGDAKITDRKWLEEWVEVEEFGTEREAFEEYGGVSTGYEKIRYI. Lys635 participates in a covalent cross-link: Glycyl lysine isopeptide (Lys-Gly) (interchain with G-Cter in ubiquitin).

The protein belongs to the purine-cytosine permease (2.A.39) family.

The protein resides in the membrane. Its function is as follows. High-affinity transport of uridine. In Saccharomyces cerevisiae (strain ATCC 204508 / S288c) (Baker's yeast), this protein is Uridine permease (FUI1).